We begin with the raw amino-acid sequence, 108 residues long: uncharacterized protein (108 aa).

An N-terminal signal peptide occupies residues 1-24; the sequence is MNLWEFRFGKSFLFIPNFIMKVLA.

The protein to M.jannaschii MJ0803.

This is an uncharacterized protein from Methanocaldococcus jannaschii (strain ATCC 43067 / DSM 2661 / JAL-1 / JCM 10045 / NBRC 100440) (Methanococcus jannaschii).